The chain runs to 245 residues: Triosephosphate isomerase (245 aa).

Residue 4-6 (NWK) coordinates substrate. His-91 (electrophile) is an active-site residue. The Proton acceptor role is filled by Glu-161. Substrate contacts are provided by residues Gly-167, Ser-207, and 228 to 229 (GG).

The protein belongs to the triosephosphate isomerase family. As to quaternary structure, homodimer.

It is found in the cytoplasm. It carries out the reaction D-glyceraldehyde 3-phosphate = dihydroxyacetone phosphate. It functions in the pathway carbohydrate biosynthesis; gluconeogenesis. Its pathway is carbohydrate degradation; glycolysis; D-glyceraldehyde 3-phosphate from glycerone phosphate: step 1/1. Involved in the gluconeogenesis. Catalyzes stereospecifically the conversion of dihydroxyacetone phosphate (DHAP) to D-glyceraldehyde-3-phosphate (G3P). The polypeptide is Triosephosphate isomerase (Chlorobaculum tepidum (strain ATCC 49652 / DSM 12025 / NBRC 103806 / TLS) (Chlorobium tepidum)).